Here is a 117-residue protein sequence, read N- to C-terminus: Large ribosomal subunit protein bL20 (117 aa).

This sequence belongs to the bacterial ribosomal protein bL20 family.

In terms of biological role, binds directly to 23S ribosomal RNA and is necessary for the in vitro assembly process of the 50S ribosomal subunit. It is not involved in the protein synthesizing functions of that subunit. The polypeptide is Large ribosomal subunit protein bL20 (Marinobacter nauticus (strain ATCC 700491 / DSM 11845 / VT8) (Marinobacter aquaeolei)).